A 397-amino-acid chain; its full sequence is S-adenosylmethionine synthase (397 aa).

His17 provides a ligand contact to ATP. Asp19 is a Mg(2+) binding site. Glu45 is a binding site for K(+). L-methionine-binding residues include Glu58 and Gln101. Positions 101 to 111 are flexible loop; the sequence is QSPDIAQGVDK. Residues 176 to 178, 243 to 244, Asp252, 258 to 259, and Lys279 contribute to the ATP site; these read DGK, RF, and RK. Asp252 is a binding site for L-methionine. Lys283 lines the L-methionine pocket.

This sequence belongs to the AdoMet synthase family. As to quaternary structure, homotetramer; dimer of dimers. It depends on Mg(2+) as a cofactor. The cofactor is K(+).

The protein resides in the cytoplasm. The enzyme catalyses L-methionine + ATP + H2O = S-adenosyl-L-methionine + phosphate + diphosphate. Its pathway is amino-acid biosynthesis; S-adenosyl-L-methionine biosynthesis; S-adenosyl-L-methionine from L-methionine: step 1/1. Functionally, catalyzes the formation of S-adenosylmethionine (AdoMet) from methionine and ATP. The overall synthetic reaction is composed of two sequential steps, AdoMet formation and the subsequent tripolyphosphate hydrolysis which occurs prior to release of AdoMet from the enzyme. In Staphylococcus aureus, this protein is S-adenosylmethionine synthase.